A 178-amino-acid polypeptide reads, in one-letter code: Large ribosomal subunit protein bL25 (178 aa).

Belongs to the bacterial ribosomal protein bL25 family. CTC subfamily. As to quaternary structure, part of the 50S ribosomal subunit; part of the 5S rRNA/L5/L18/L25 subcomplex. Contacts the 5S rRNA. Binds to the 5S rRNA independently of L5 and L18.

Its function is as follows. This is one of the proteins that binds to the 5S RNA in the ribosome where it forms part of the central protuberance. The polypeptide is Large ribosomal subunit protein bL25 (Campylobacter hominis (strain ATCC BAA-381 / DSM 21671 / CCUG 45161 / LMG 19568 / NCTC 13146 / CH001A)).